The primary structure comprises 139 residues: Ribonuclease P protein component (139 aa).

The protein belongs to the RnpA family. As to quaternary structure, consists of a catalytic RNA component (M1 or rnpB) and a protein subunit.

The enzyme catalyses Endonucleolytic cleavage of RNA, removing 5'-extranucleotides from tRNA precursor.. In terms of biological role, RNaseP catalyzes the removal of the 5'-leader sequence from pre-tRNA to produce the mature 5'-terminus. It can also cleave other RNA substrates such as 4.5S RNA. The protein component plays an auxiliary but essential role in vivo by binding to the 5'-leader sequence and broadening the substrate specificity of the ribozyme. This chain is Ribonuclease P protein component, found in Chlamydia felis (strain Fe/C-56) (Chlamydophila felis).